The chain runs to 152 residues: Deoxyuridine 5'-triphosphate nucleotidohydrolase (152 aa).

Residues 71–73 (RSG), asparagine 84, 88–90 (LID), and methionine 98 each bind substrate.

This sequence belongs to the dUTPase family. The cofactor is Mg(2+).

The catalysed reaction is dUTP + H2O = dUMP + diphosphate + H(+). It functions in the pathway pyrimidine metabolism; dUMP biosynthesis; dUMP from dCTP (dUTP route): step 2/2. Its function is as follows. This enzyme is involved in nucleotide metabolism: it produces dUMP, the immediate precursor of thymidine nucleotides and it decreases the intracellular concentration of dUTP so that uracil cannot be incorporated into DNA. This Shewanella loihica (strain ATCC BAA-1088 / PV-4) protein is Deoxyuridine 5'-triphosphate nucleotidohydrolase.